A 248-amino-acid polypeptide reads, in one-letter code: Type III pantothenate kinase (248 aa).

6–13 (ELGNSQLK) contributes to the ATP binding site. Substrate is bound by residues Tyr94 and 101-104 (GVDR). Asp103 (proton acceptor) is an active-site residue. Asp123 is a K(+) binding site. An ATP-binding site is contributed by Thr126. Thr179 contributes to the substrate binding site.

Belongs to the type III pantothenate kinase family. Homodimer. NH4(+) is required as a cofactor. The cofactor is K(+).

The protein resides in the cytoplasm. It catalyses the reaction (R)-pantothenate + ATP = (R)-4'-phosphopantothenate + ADP + H(+). It participates in cofactor biosynthesis; coenzyme A biosynthesis; CoA from (R)-pantothenate: step 1/5. In terms of biological role, catalyzes the phosphorylation of pantothenate (Pan), the first step in CoA biosynthesis. The polypeptide is Type III pantothenate kinase (Hydrogenovibrio crunogenus (strain DSM 25203 / XCL-2) (Thiomicrospira crunogena)).